The chain runs to 967 residues: MEGSGDKRHENLDEDGYNWHAQSVESVSKALGTNPNLGVSDGRSAELLKQHGYNELKGQAGVNPWKILLRQVSNGLTAVLVVAMVVSFAVKDYAEAGVLVIVIAFNTIVGFVQEYRAEKTMDALRKMASPSAKVIRDGSHHRISSRDVVPGDLLTFEVGDVVPADCRLIEVLNLEVDEALLTGEAVPSLKTVQPIGGKDVSIGDRTNMSYSSTTVVKGRGKAIVVSTGMSTEIGKISKAINETKTQSTPMQRKLNLMAYMLLAFALLLALIVFAVNKFNFSTEVVIYAIALSIAIIPEGLIAVITIVQALGVRRMAKQHALVRKLVALESLQAVTNICSDKTGTLTEGKMVVTNVWLPGHESEYIVAGQGYETVGDLSTSAGVAVVRSAALEDVNYRLLVECCALCNTANIVEASEGKVWGDPTEIALQVFAYKMEMGMPILRKHKELVEEFPFSSDTKRMSMVCQTESGNFLEIFTKGSEVVLSICDNVMDRTGDIHSISGDEGFLKLVSTQQEEMAKQGLRVLVLAYGQVSERSIGKPLSKWERNDAEKSLTFLGLVGIRDTPRVESEQSVRNCHRAGITVHMLTGDHKATAMSIAKEVGIIEEPHGSEIANGNEIVPLSASVMTATEFDQLTDEQVDALVDLPLVIARCTPSTKVRMIDALHRRKKFVAMTGDGVNDAPSLKKADVGIAMGAGSDVAKTSSDIVLTDNNFATIVQAIGEGRRIFSNIKKFVLHLLSTNVGQVIVLLIGLAFKDRTGTSVFPLSPVQILFLNLVTGTPPAMALGIEPASSSVMQVPPHVKGLFTVELIMDIFIFGTFIGILALASWVLVIYPFGNSDLATLCNTTANLQECSTIFRARSTVQLSFTWMILFHAYNCRHLRASLLTAEGGGASRFFSNKVLVASVFIGALLPIPTIYIGTLNTEVFKQEGITWEWIIVIVSVFVFFLLSEFYKLLKRRFIKTPYNM.

Residues 1–70 (MEGSGDKRHE…GVNPWKILLR (70 aa)) are Cytoplasmic-facing. A helical membrane pass occupies residues 71–91 (QVSNGLTAVLVVAMVVSFAVK). Aspartate 92 is a topological domain (extracellular). A helical transmembrane segment spans residues 93 to 113 (YAEAGVLVIVIAFNTIVGFVQ). Residues 114–254 (EYRAEKTMDA…TQSTPMQRKL (141 aa)) lie on the Cytoplasmic side of the membrane. The helical transmembrane segment at 255-275 (NLMAYMLLAFALLLALIVFAV) threads the bilayer. The Extracellular portion of the chain corresponds to 276-283 (NKFNFSTE). A glycan (N-linked (GlcNAc...) asparagine) is linked at asparagine 279. Residues 284 to 304 (VVIYAIALSIAIIPEGLIAVI) traverse the membrane as a helical segment. The Cytoplasmic segment spans residues 305–732 (TIVQALGVRR…GRRIFSNIKK (428 aa)). Catalysis depends on aspartate 340, which acts as the 4-aspartylphosphate intermediate. Positions 340 and 342 each coordinate Mg(2+). 9 residues coordinate ATP: threonine 342, glutamate 425, lysine 478, arginine 523, threonine 587, glycine 588, aspartate 589, arginine 651, and lysine 657. Aspartate 676 contacts Mg(2+). Position 679 (asparagine 679) interacts with ATP. A helical transmembrane segment spans residues 733-753 (FVLHLLSTNVGQVIVLLIGLA). Topologically, residues 754–812 (FKDRTGTSVFPLSPVQILFLNLVTGTPPAMALGIEPASSSVMQVPPHVKGLFTVELIMD) are extracellular. A helical membrane pass occupies residues 813 to 833 (IFIFGTFIGILALASWVLVIY). At 834–900 (PFGNSDLATL…GGASRFFSNK (67 aa)) the chain is on the cytoplasmic side. The helical transmembrane segment at 901-921 (VLVASVFIGALLPIPTIYIGT) threads the bilayer. At 922-931 (LNTEVFKQEG) the chain is on the extracellular side. Residues 932–952 (ITWEWIIVIVSVFVFFLLSEF) traverse the membrane as a helical segment. At 953 to 967 (YKLLKRRFIKTPYNM) the chain is on the cytoplasmic side.

Belongs to the cation transport ATPase (P-type) (TC 3.A.3) family. Type IID subfamily. It depends on Mg(2+) as a cofactor. The active site is phosphorylated in presence of sodium or potassium and in conditions of higher pH. Not phosphorylated in presence of calcium ions.

It localises to the cell membrane. It catalyses the reaction Na(+)(in) + ATP + H2O = Na(+)(out) + ADP + phosphate + H(+). It carries out the reaction K(+)(in) + ATP + H2O = K(+)(out) + ADP + phosphate + H(+). Its function is as follows. Catalyzes the hydrolysis of ATP coupled with the export of sodium and potassium from the cell. May pump potassium inefficiently. May transport other cations such as lithium. Sodium/potassium efflux ATPases are involved in salt tolerance and maintaining the membrane potential across the plasma membrane in high salinity (Na+) or alkaline (K+) environments. The protein is Sodium/potassium exporting P-type ATPase 1 of Physcomitrium patens (Spreading-leaved earth moss).